The sequence spans 1295 residues: Phosphoribosylformylglycinamidine synthase (1295 aa).

Positions 304 to 326 (WPGAATGSGGEIRDEGATGRGAK) are disordered. Residues 306–317 (GAATGSGGEIRD), 385–387 (TGY), and Ala-677 contribute to the ATP site. Mg(2+) is bound by residues Asp-678, Glu-717, Asn-721, and Asp-884. Positions 995–1012 (LRDNPESADQEHASRQDD) are enriched in basic and acidic residues. A disordered region spans residues 995 to 1017 (LRDNPESADQEHASRQDDNDPGL). The 254-residue stretch at 1042–1295 (VAVLREQGVN…LFRNARKQLG (254 aa)) folds into the Glutamine amidotransferase type-1 domain. Cys-1135 (nucleophile) is an active-site residue. Residues His-1260 and Glu-1262 contribute to the active site.

The protein in the N-terminal section; belongs to the FGAMS family. In terms of assembly, monomer.

It localises to the cytoplasm. It catalyses the reaction N(2)-formyl-N(1)-(5-phospho-beta-D-ribosyl)glycinamide + L-glutamine + ATP + H2O = 2-formamido-N(1)-(5-O-phospho-beta-D-ribosyl)acetamidine + L-glutamate + ADP + phosphate + H(+). It participates in purine metabolism; IMP biosynthesis via de novo pathway; 5-amino-1-(5-phospho-D-ribosyl)imidazole from N(2)-formyl-N(1)-(5-phospho-D-ribosyl)glycinamide: step 1/2. Functionally, phosphoribosylformylglycinamidine synthase involved in the purines biosynthetic pathway. Catalyzes the ATP-dependent conversion of formylglycinamide ribonucleotide (FGAR) and glutamine to yield formylglycinamidine ribonucleotide (FGAM) and glutamate. The chain is Phosphoribosylformylglycinamidine synthase from Sodalis glossinidius (strain morsitans).